A 299-amino-acid polypeptide reads, in one-letter code: pH-regulated antigen PRA1 (299 aa).

An N-terminal signal peptide occupies residues 1 to 15 (MNYLLFCLFFAFSVA). N-linked (GlcNAc...) asparagine glycans are attached at residues Asn48, Asn89, Asn135, and Asn208. The tract at residues 253–299 (FEDSDSGSDSGASSTASSSHQHTDSNPSATTDANSHCHTHADGEVHC) is disordered. Residues 259–272 (GSDSGASSTASSSH) show a composition bias toward low complexity. Polar residues predominate over residues 278–288 (NPSATTDANSH).

Belongs to the ZPS1 family. Component of a multiprotein complex of 250 kDa composed of at least HYR1, MP65, and PRA1. Interacts with host Integrin alpha-M/beta-2 heterodimer. Also binds human factor H (CFH), CFHR1, plasminogen (PLG), complement C3, and C4BPA. Interacts with ZRT101. Post-translationally, N- and O-glycosylated. The N- and 0-glycosidically linked carbohydrates represent 18 to 20 percent and 3 to 4 percent, respectively, of the molecular mass of PRA1. 0-linked sugar residues may be involved in the interaction with fibrinogen. Contributes highly to the carbohydrate component of the matrix. Treatment with tunicamycin impairs glycosylation.

It localises to the secreted. Functionally, cell surface protein involved in the host-parasite interaction during candidal infection. With MP65, represents a major component of the biofilm matrix. As a surface protein, binds the two human complement regulators CFH and CFHR1, as well as plasminogen PLG, mediates complement evasion and extra-cellular matrix interaction and/or degradation. As a released protein, enhances complement control in direct vicinity of the yeast and thus generates an additional protective layer which controls host complement attack, assisting the fungus in escaping host surveillance. Binds to host fluid-phase C3 and blocks cleavage of C3 to C3a and C3b, leading to inhibition of complement activation and protection from uptake of C.albicans by human macrophages. Also mediates human complement control and complement evasion through binding to C4BPA, another human complement inhibitor, as well as through binding to host integrin alpha-M/beta-2. Binds zinc from its environment and then reassociates with ZRT1 to acquire this essential metal. The chain is pH-regulated antigen PRA1 from Candida albicans (strain SC5314 / ATCC MYA-2876) (Yeast).